We begin with the raw amino-acid sequence, 210 residues long: Chloramphenicol acetyltransferase (210 aa).

Residue His-79 is part of the active site.

The protein belongs to the transferase hexapeptide repeat family.

The enzyme catalyses chloramphenicol + acetyl-CoA = chloramphenicol 3-acetate + CoA. Its function is as follows. This enzyme is an effector of chloramphenicol resistance in bacteria. This Klebsiella aerogenes (Enterobacter aerogenes) protein is Chloramphenicol acetyltransferase (catB4).